The sequence spans 148 residues: UPF0756 membrane protein ESA_02180 (148 aa).

Helical transmembrane passes span 4–24 (ITLL…NMAV), 51–71 (VTVG…SGTL), 86–106 (LVAI…VALM), and 112–132 (IVAG…GVPV).

Belongs to the UPF0756 family.

It localises to the cell membrane. The sequence is that of UPF0756 membrane protein ESA_02180 from Cronobacter sakazakii (strain ATCC BAA-894) (Enterobacter sakazakii).